A 239-amino-acid chain; its full sequence is LexA repressor (239 aa).

The H-T-H motif DNA-binding region spans 26–46 (FDEMKDALDLKSKSGIHRLIT). Residues serine 160 and lysine 198 each act as for autocatalytic cleavage activity in the active site.

It belongs to the peptidase S24 family. Homodimer.

It carries out the reaction Hydrolysis of Ala-|-Gly bond in repressor LexA.. Represses a number of genes involved in the response to DNA damage (SOS response), including recA and lexA. In the presence of single-stranded DNA, RecA interacts with LexA causing an autocatalytic cleavage which disrupts the DNA-binding part of LexA, leading to derepression of the SOS regulon and eventually DNA repair. This Methylobacterium sp. (strain 4-46) protein is LexA repressor.